The primary structure comprises 508 residues: Vacuolar serine-type carboxypeptidase ATG42 (508 aa).

A signal peptide spans 1 to 24; that stretch reads MKYLNLVFVLQLLISIKYASFGRA. Cystine bridges form between Cys132/Cys375, Cys267/Cys281, Cys291/Cys314, Cys298/Cys307, and Cys336/Cys345. N-linked (GlcNAc...) asparagine glycosylation occurs at Asn163. The active site involves Ser219. A glycan (N-linked (GlcNAc...) asparagine) is linked at Asn242. Residues Asn339 and Asn371 are each glycosylated (N-linked (GlcNAc...) asparagine). Asp415 is a catalytic residue. Cys418 contributes to the substrate binding site. The active site involves His474. Substrate is bound at residue Met475.

This sequence belongs to the peptidase S10 family.

The protein resides in the vacuole lumen. It catalyses the reaction Release of a C-terminal amino acid with broad specificity.. Its function is as follows. Vacuolar serine-type carboxypeptidase involved in vacuolar zymogen activation, breakdown of the autophagic body, and autophagosome-dependent protein synthesis. Plays a key role in phytochelatin (PC) synthesis from glutathione (GSH) by cleaving the Gly from GSH and form the PC-peptides of the structure (gamma-Glu-Cys)2-Gly. Also involved in resistance to xenobiotics via the degradation of glutathione-S-conjugates. The protein is Vacuolar serine-type carboxypeptidase ATG42 of Saccharomyces cerevisiae (strain ATCC 204508 / S288c) (Baker's yeast).